Consider the following 365-residue polypeptide: 1-aminocyclopropane-1-carboxylate oxidase homolog 1 (365 aa).

Residues 212-313 (CTNSLLLLGH…RISVACFFSS (102 aa)) form the Fe2OG dioxygenase domain. The Fe cation site is built by H238, D240, and H294.

This sequence belongs to the iron/ascorbate-dependent oxidoreductase family. It depends on Fe cation as a cofactor.

In Arabidopsis thaliana (Mouse-ear cress), this protein is 1-aminocyclopropane-1-carboxylate oxidase homolog 1.